Consider the following 233-residue polypeptide: 2-C-methyl-D-erythritol 4-phosphate cytidylyltransferase (233 aa).

The protein belongs to the IspD/TarI cytidylyltransferase family. IspD subfamily.

The catalysed reaction is 2-C-methyl-D-erythritol 4-phosphate + CTP + H(+) = 4-CDP-2-C-methyl-D-erythritol + diphosphate. Its pathway is isoprenoid biosynthesis; isopentenyl diphosphate biosynthesis via DXP pathway; isopentenyl diphosphate from 1-deoxy-D-xylulose 5-phosphate: step 2/6. Catalyzes the formation of 4-diphosphocytidyl-2-C-methyl-D-erythritol from CTP and 2-C-methyl-D-erythritol 4-phosphate (MEP). This chain is 2-C-methyl-D-erythritol 4-phosphate cytidylyltransferase, found in Thiobacillus denitrificans (strain ATCC 25259 / T1).